Reading from the N-terminus, the 920-residue chain is Phosphoenolpyruvate carboxylase (920 aa).

Catalysis depends on residues H138 and K583.

It belongs to the PEPCase type 1 family. The cofactor is Mg(2+).

It carries out the reaction oxaloacetate + phosphate = phosphoenolpyruvate + hydrogencarbonate. In terms of biological role, forms oxaloacetate, a four-carbon dicarboxylic acid source for the tricarboxylic acid cycle. This is Phosphoenolpyruvate carboxylase from Streptococcus pyogenes serotype M3 (strain ATCC BAA-595 / MGAS315).